The primary structure comprises 93 residues: UPF0298 protein lwe2074 (93 aa).

It belongs to the UPF0298 family.

It is found in the cytoplasm. The chain is UPF0298 protein lwe2074 from Listeria welshimeri serovar 6b (strain ATCC 35897 / DSM 20650 / CCUG 15529 / CIP 8149 / NCTC 11857 / SLCC 5334 / V8).